Reading from the N-terminus, the 720-residue chain is Mitogen-activated protein kinase 6 (720 aa).

Met-1 is covalently cross-linked (Peptide (Met-Gly) (interchain with G-Cter in ubiquitin)). The 297-residue stretch at Tyr-20–Met-316 folds into the Protein kinase domain. Residues Leu-26 to Val-34 and Lys-49 each bind ATP. Residue Asp-152 is the Proton acceptor of the active site. Ser-189 is modified (phosphoserine; by PAK1, PAK2 and PAK3). The SEG motif motif lies at Ser-189–Gly-191. Residues Phe-332–Glu-337 carry the FRIEDE motif motif. 4 positions are modified to phosphoserine: Ser-386, Ser-452, Ser-554, and Ser-556. The interval Ser-638–Glu-657 is disordered. The segment covering Glu-647–Glu-657 has biased composition (basic and acidic residues). Ser-683 carries the post-translational modification Phosphoserine. The segment covering Pro-698–Asn-714 has biased composition (polar residues). The segment at Pro-698–Asn-720 is disordered.

This sequence belongs to the protein kinase superfamily. CMGC Ser/Thr protein kinase family. MAP kinase subfamily. Heterodimer with ERK4/MAPK4. Interacts with (via FRIEDE motif) MAPKAPK5. Interacts with UBE3A; this interaction may be indirect and mediated by HERC2, possibly via HERC2 interaction with NEURL4. Mg(2+) is required as a cofactor. Phosphorylated at Ser-189 by PAK1, PAK2 and PAK3 resulting in catalytic activation. Phosphorylated by MAPKAPK5 at other sites. Post-translationally, ubiquitination at Met-1 leads to degradation by the proteasome pathway. In terms of tissue distribution, highest levels within the nervous system, expressed in different tissues, mostly in skeletal muscle.

Its subcellular location is the cytoplasm. The protein localises to the nucleus. It catalyses the reaction L-seryl-[protein] + ATP = O-phospho-L-seryl-[protein] + ADP + H(+). The catalysed reaction is L-threonyl-[protein] + ATP = O-phospho-L-threonyl-[protein] + ADP + H(+). Activated by phosphorylation at Ser-189. Atypical MAPK protein. Phosphorylates microtubule-associated protein 2 (MAP2) and MAPKAPK5. The precise role of the complex formed with MAPKAPK5 is still unclear, but the complex follows a complex set of phosphorylation events: upon interaction with atypical MAPKAPK5, ERK3/MAPK6 is phosphorylated at Ser-189 and then mediates phosphorylation and activation of MAPKAPK5, which in turn phosphorylates ERK3/MAPK6. May promote entry in the cell cycle. The sequence is that of Mitogen-activated protein kinase 6 (Mapk6) from Rattus norvegicus (Rat).